Reading from the N-terminus, the 169-residue chain is Disulfide bond formation protein B (169 aa).

Over 1–13 the chain is Cytoplasmic; it reads MSQLQQFCHNRFS. A helical transmembrane segment spans residues 14–30; that stretch reads WGLLLLSAIGLELAALF. At 31 to 48 the chain is on the periplasmic side; it reads FQYGMDLAPCVMCIYIRV. A disulfide bridge links Cys-40 with Cys-43. A helical transmembrane segment spans residues 49–64; that stretch reads AVLGIILAALIGILQP. At 65–71 the chain is on the cytoplasmic side; that stretch reads KVWLLRL. A helical transmembrane segment spans residues 72 to 89; sequence VGMAGWAVSAVWGFKLAY. Residues 90–144 lie on the Periplasmic side of the membrane; it reads ELNQMQVNPSPFATCSFYPEFPSFMPLDTWLPSVFSPTGMCSDSPWSWLSVSMAQ. Cys-104 and Cys-130 are disulfide-bonded. The chain crosses the membrane as a helical span at residues 145–163; the sequence is WMMLGFAIYGVIWLLMLLP. Residues 164–169 lie on the Cytoplasmic side of the membrane; the sequence is ALKSAK.

This sequence belongs to the DsbB family.

It localises to the cell inner membrane. Functionally, required for disulfide bond formation in some periplasmic proteins. Acts by oxidizing the DsbA protein. The sequence is that of Disulfide bond formation protein B from Shewanella frigidimarina (strain NCIMB 400).